The following is a 266-amino-acid chain: MKLSVSPPPFDGAPVVVLIAGLGGGGSYWLPQLAALEQEYQVVCYDQRGTGNNPDTLPEEYTLAQMAGELAQALTAVGITRYCVVGHALGALIGLQLALDTPDALKALVCVNGWLTLNAHTRRCFQIRERLLHAGGAQAWVEAQPLFLYPADWMAARAPRLEAEEALALAHFQGKNNLLRRLNALKKADFSRHAARMACPVHLICSADDLLVPSVCSSELQAALPHSHSVVMRQGGHACNVTEPETFNTLLLNGLASLLHSHEPAL.

The protein belongs to the AB hydrolase superfamily. Hydrolase RutD family.

It catalyses the reaction carbamate + 2 H(+) = NH4(+) + CO2. In terms of biological role, involved in pyrimidine catabolism. May facilitate the hydrolysis of carbamate, a reaction that can also occur spontaneously. This Enterobacter cloacae subsp. cloacae (strain ATCC 13047 / DSM 30054 / NBRC 13535 / NCTC 10005 / WDCM 00083 / NCDC 279-56) protein is Putative carbamate hydrolase RutD.